A 398-amino-acid chain; its full sequence is tRNA-specific 2-thiouridylase MnmA (398 aa).

Residues 19–26 and L45 contribute to the ATP site; that span reads AMSGGVDS. The Nucleophile role is filled by C113. A disulfide bridge links C113 with C210. Residue G137 participates in ATP binding. The tract at residues 160-162 is interaction with tRNA; it reads RDQ. C210 acts as the Cysteine persulfide intermediate in catalysis.

This sequence belongs to the MnmA/TRMU family.

It localises to the cytoplasm. The enzyme catalyses S-sulfanyl-L-cysteinyl-[protein] + uridine(34) in tRNA + AH2 + ATP = 2-thiouridine(34) in tRNA + L-cysteinyl-[protein] + A + AMP + diphosphate + H(+). In terms of biological role, catalyzes the 2-thiolation of uridine at the wobble position (U34) of tRNA, leading to the formation of s(2)U34. This Rhodopseudomonas palustris (strain HaA2) protein is tRNA-specific 2-thiouridylase MnmA.